The sequence spans 292 residues: RNA 5'-monophosphate methyltransferase (292 aa).

Residues 1–20 (MAVPTELHGGSVKETAAEKE) form a disordered region. Residues Arg-46, Asn-76, Asp-110, 135–136 (DF), and Met-164 contribute to the S-adenosyl-L-methionine site. A Bin3-type SAM domain is found at 53–274 (ELLRQLFPES…KQTIETHPIP (222 aa)).

Belongs to the methyltransferase superfamily. As to quaternary structure, interacts with DICER1; the interaction may be mediated by RNA.

It localises to the cytoplasm. The enzyme catalyses a 5'-end 5'-phospho-ribonucleoside-RNA + S-adenosyl-L-methionine = a 5'-end (5'-methylphospho)-ribonucleoside-RNA + S-adenosyl-L-homocysteine. The catalysed reaction is a 5'-end 5'-phospho-ribonucleoside-RNA + 2 S-adenosyl-L-methionine = a 5'-end (5'-bismethylphospho)-ribonucleoside-RNA + 2 S-adenosyl-L-homocysteine. O-methyltransferase that specifically monomethylates 5'-monophosphate of cytoplasmic histidyl tRNA (tRNA(His)), acting as a capping enzyme by protecting tRNA(His) from cleavage by DICER1. Also able, with less efficiently, to methylate the 5' monophosphate of a subset of pre-miRNAs, acting as a negative regulator of miRNA processing. The 5' monophosphate of pre-miRNAs is recognized by DICER1 and is required for pre-miRNAs processing: methylation at this position reduces the processing of pre-miRNAs by DICER1. Was also reported to mediate dimethylation of pre-miR-145; however dimethylation cannot be reproduced by another group which observes a monomethylation of pre-miR-145. In Pongo abelii (Sumatran orangutan), this protein is RNA 5'-monophosphate methyltransferase (BCDIN3D).